We begin with the raw amino-acid sequence, 277 residues long: Glycerol-3-phosphate acyltransferase (277 aa).

The next 5 membrane-spanning stretches (helical) occupy residues 3–23 (FFIFLILVGYLMGSINSAIIV), 55–75 (IMVMVFDALKGILPVILAKLL), 79–99 (PVTVAFTALAAVVGHMYPVFF), 111–131 (IGALLAFHFVIGVMVAATWLL), and 155–175 (LILVGNLNIFPPLFMITILVL). The segment at 231–277 (KTEQAEAVKKPKAKKATTKAKKTTSKEETAKKPKSTKPKTKTVKEKE) is disordered. 2 stretches are compositionally biased toward basic residues: residues 240–253 (KPKAKKATTKAKKT) and 262–271 (KPKSTKPKTK).

It belongs to the PlsY family. As to quaternary structure, probably interacts with PlsX.

Its subcellular location is the cell inner membrane. The catalysed reaction is an acyl phosphate + sn-glycerol 3-phosphate = a 1-acyl-sn-glycero-3-phosphate + phosphate. Its pathway is lipid metabolism; phospholipid metabolism. Functionally, catalyzes the transfer of an acyl group from acyl-phosphate (acyl-PO(4)) to glycerol-3-phosphate (G3P) to form lysophosphatidic acid (LPA). This enzyme utilizes acyl-phosphate as fatty acyl donor, but not acyl-CoA or acyl-ACP. This is Glycerol-3-phosphate acyltransferase from Legionella pneumophila (strain Lens).